The following is a 595-amino-acid chain: P2X purinoceptor 7 (595 aa).

Residues 1–22 (MPACCSCSDVFQYETNKVTRIQ) are Cytoplasmic-facing. Cys-4 carries S-palmitoyl cysteine lipidation. A helical membrane pass occupies residues 23-46 (SMNYGTIKWFFHVIIFSYVCFALV). The Extracellular portion of the chain corresponds to 47-328 (SDKLYQRKEP…ILVFGTGGKF (282 aa)). Disulfide bonds link Cys-119-Cys-168, Cys-129-Cys-152, and Cys-135-Cys-162. 2 positions are modified to ADP-ribosylarginine: Arg-125 and Arg-133. Residue Asn-187 is glycosylated (N-linked (GlcNAc...) asparagine). ATP is bound at residue Thr-189. Residues Asn-202 and Asn-213 are each glycosylated (N-linked (GlcNAc...) asparagine). Cysteines 216 and 226 form a disulfide. Asn-241 carries N-linked (GlcNAc...) asparagine glycosylation. Cysteines 260 and 269 form a disulfide. Asn-284 carries an N-linked (GlcNAc...) asparagine glycan. ATP-binding residues include Arg-294 and Lys-311. The chain crosses the membrane as a helical span at residues 329 to 353 (DIIQLVVYIGSTLSYFGLAAVFIDF). Ser-342 contacts Na(+). Tyr-343 carries the post-translational modification Phosphotyrosine. The Cytoplasmic portion of the chain corresponds to 354–595 (LIDTYSSNCC…GQYSGFKSPY (242 aa)). The segment at 360–377 (SNCCRSHIYPWCKCCQPC) is C-cys anchor. 4 S-palmitoyl cysteine lipidation sites follow: Cys-362, Cys-363, Cys-374, and Cys-377. Ser-390 carries the post-translational modification Phosphoserine. Residues 395–595 (KPTLKYVSFV…GQYSGFKSPY (201 aa)) are cytoplasmic ballast. Zn(2+)-binding residues include Cys-479, Cys-499, and Cys-506. GTP-binding residues include Arg-546, His-547, Tyr-550, and Ala-567. Cys-572 is a Zn(2+) binding site. GTP-binding residues include Lys-583, Ser-589, and Gly-590.

This sequence belongs to the P2X receptor family. Homotrimers. Interacts with LAMA3, ITGB2, ACTB, ACTN4, SVIL, MPP3, HSPA1, HSPCB, HSPA8, PIK230 and PTPRB. Interacts (via C-terminus) with EMP2. Interacts with isoform B; this interaction potentiates P2RX7 responses. In terms of processing, phosphorylation results in its inactivation. Post-translationally, ADP-ribosylation at Arg-125 is necessary and sufficient to activate P2RX7 and gate the channel. Palmitoylation of several cysteines in the C-terminal cytoplasmic tail is required for efficient localization to cell surface. Palmitoylation prevents channel desensitization by physically anchoring the palmitoylated groups to the membrane. As to expression, widely expressed with highest levels in brain and immune tissues. In terms of tissue distribution, predominant form in many tissues.

Its subcellular location is the cell membrane. The catalysed reaction is Ca(2+)(in) = Ca(2+)(out). It carries out the reaction K(+)(in) = K(+)(out). The enzyme catalyses Na(+)(in) = Na(+)(out). With respect to regulation, activated by high extracellular ATP levels (0.1-2.5 mM). The synthetic analog 2'(3')-O-(4-benzoylbenzoyl)ATP (BzATP) acts as a potent agonist. Does not undergo desensitization, instead, undergoes a facilitation process where currents progressively increase with repetitive or prolonged agonist application. Palmitoylation prevents channel desensitization. The permeability of the P2RX7 channel is modulated by the amount of cholesterol in the plasma membrane. ATP-gated nonselective transmembrane cation channel that requires high millimolar concentrations of ATP for activation. Upon ATP binding, it rapidly opens to allow the influx of small cations Na(+) and Ca(2+), and the K(+) efflux. Also has the ability to form a large pore in the cell membrane, allowing the passage of large cationic molecules. In microglia, may mediate NADPH transport across the plasma membrane. In immune cells, P2RX7 acts as a molecular sensor in pathological inflammatory states by detecting and responding to high local concentrations of extracellar ATP. In microglial cells, P2RX7 activation leads to the release of pro-inflammatory cytokines, such as IL-1beta and IL-18, through the activation of the NLRP3 inflammasome and caspase-1. Cooperates with KCNK6 to activate NLRP3 inflammasome. Activates death pathways leading to apoptosis and autophagy. Activates death pathways leading to pyroptosis. In terms of biological role, shows ion channel activity but no macropore function. Functionally, non-functional channel. This Homo sapiens (Human) protein is P2X purinoceptor 7 (P2RX7).